The sequence spans 207 residues: Segregation and condensation protein B (207 aa).

Belongs to the ScpB family. Homodimer. Homodimerization may be required to stabilize the binding of ScpA to the Smc head domains. Component of a cohesin-like complex composed of ScpA, ScpB and the Smc homodimer, in which ScpA and ScpB bind to the head domain of Smc. The presence of the three proteins is required for the association of the complex with DNA.

The protein localises to the cytoplasm. Functionally, participates in chromosomal partition during cell division. May act via the formation of a condensin-like complex containing Smc and ScpA that pull DNA away from mid-cell into both cell halves. The chain is Segregation and condensation protein B from Mycoplasmopsis pulmonis (strain UAB CTIP) (Mycoplasma pulmonis).